The primary structure comprises 310 residues: Uridine phosphorylase 1 (310 aa).

Residues G60, R94, and R138–T141 each bind phosphate. Uridine-binding positions include S142 to G143 and Q217 to R219.

The protein belongs to the PNP/UDP phosphorylase family. In terms of assembly, homodimer.

The catalysed reaction is uridine + phosphate = alpha-D-ribose 1-phosphate + uracil. It carries out the reaction 2'-deoxyuridine + phosphate = 2-deoxy-alpha-D-ribose 1-phosphate + uracil. It participates in pyrimidine metabolism; UMP biosynthesis via salvage pathway; uracil from uridine (phosphorylase route): step 1/1. In terms of biological role, catalyzes the reversible phosphorylytic cleavage of uridine to uracil and ribose-1-phosphate which can then be utilized as carbon and energy sources or in the rescue of pyrimidine bases for nucleotide synthesis. Shows broad substrate specificity and can also accept deoxyuridine and other analogous compounds. The sequence is that of Uridine phosphorylase 1 from Homo sapiens (Human).